The sequence spans 735 residues: Urea active transporter (735 aa).

The Cytoplasmic segment spans residues 1 to 14; the sequence is MGEFKPPLPQGAGY. Residues 15–35 traverse the membrane as a helical segment; it reads AIVLGLGAVFAGMMVLTTYLL. Over 36 to 85 the chain is Extracellular; sequence KRYQKEIITAEEFTTAGRSVKTGLVAAAVVSSWIWCSTLLTSSTKEYADG. The chain crosses the membrane as a helical span at residues 86-106; it reads IFGGYAYAAGACFQIIAFAIL. The Cytoplasmic segment spans residues 107-130; it reads AIKTKQMAPNAHTYLELVRTRYGK. Residues 131-151 form a helical membrane-spanning segment; sequence IGHGCYLFYAIATNILVTSML. The Extracellular portion of the chain corresponds to 152–166; that stretch reads LTSGSAVFSDLTGMN. A helical membrane pass occupies residues 167 to 187; sequence TIASCFLLPVGVVVYTLFGGI. Over 188–189 the chain is Cytoplasmic; sequence KA. A helical transmembrane segment spans residues 190-210; the sequence is TFLTDYMHTCVIIIIVLVFAF. The Extracellular portion of the chain corresponds to 211–253; it reads KVYATSDVLGSPGKVYDLVREAAKRHPVDGNYQGEYMTMTSKS. Residues 254-274 form a helical membrane-spanning segment; it reads AGILLIINLIGNFGTVFLDNG. At 275-295 the chain is on the cytoplasmic side; sequence YWNKAISASPAASLKAYAIGG. Residues 296 to 316 traverse the membrane as a helical segment; sequence LAWFAVPSLISLTMGLACLAV. Topologically, residues 317 to 343 are extracellular; it reads ETSPNFPTYPDPLTSFQANSGLVLPAA. Residues 344–364 form a helical membrane-spanning segment; that stretch reads AIAIMGKGGAVASLLMIFMAV. Residues 365-403 are Cytoplasmic-facing; it reads TSAMSAELIAVSSVFTYDIYREYIDPRASGKKLIYTSHV. Residues 404 to 424 traverse the membrane as a helical segment; that stretch reads ACIFFGLAMSGFSVGLYYGGI. Ser425 is a topological domain (extracellular). A helical membrane pass occupies residues 426-446; that stretch reads MGYIYEMMGIIISSAVLPVVL. The Cytoplasmic segment spans residues 447-454; sequence TLCSKDMN. A helical membrane pass occupies residues 455 to 475; sequence LVAAVVSPILGTGLAIMSWLV. Topologically, residues 476-496 are extracellular; the sequence is CTKSLYKELTVDTTFMDYPML. A helical membrane pass occupies residues 497-517; the sequence is TGNLVALLSPAIFIPILTYVF. The Cytoplasmic portion of the chain corresponds to 518–618; that stretch reads KPQNFDWEKM…EQRELARGLK (101 aa). Positions 553–572 are disordered; sequence ANDKEQEEETNSLVSDSEKN. The chain crosses the membrane as a helical span at residues 619–639; that stretch reads IAYFLCVFFALAFLVVWPMPM. Topologically, residues 640–650 are extracellular; that stretch reads YGSKYIFSKKF. The helical transmembrane segment at 651 to 671 threads the bilayer; the sequence is FTGWVVVMIIWLFFSAFAVCI. Residues 672-735 are Cytoplasmic-facing; it reads YPLWEGRHGI…SHFGQVDEII (64 aa).

The protein belongs to the sodium:solute symporter (SSF) (TC 2.A.21) family. As to quaternary structure, may polymerize.

The protein resides in the membrane. Functionally, required for active transport of urea. The chain is Urea active transporter (DUR3) from Saccharomyces cerevisiae (strain ATCC 204508 / S288c) (Baker's yeast).